Here is a 188-residue protein sequence, read N- to C-terminus: MRVIASSIRKGNVIEQDGKLYVVLTAENIHPGKGTPVSQIEMRRISDGVKISERYKTTDQVERATIEDHNFTFLYEDADGFHFMNAENYDQVQVPKDVVGNVAPYLQENMVVKLSLHEMVPVAITLPQRVTLEVVETEPVTKGQTASSSYKPAMLSNGVRTGVPPHVAVGTRIVVMTEDGSYVERAKD.

It belongs to the elongation factor P family.

The protein resides in the cytoplasm. The protein operates within protein biosynthesis; polypeptide chain elongation. Involved in peptide bond synthesis. Stimulates efficient translation and peptide-bond synthesis on native or reconstituted 70S ribosomes in vitro. Probably functions indirectly by altering the affinity of the ribosome for aminoacyl-tRNA, thus increasing their reactivity as acceptors for peptidyl transferase. The polypeptide is Elongation factor P (Nitrobacter hamburgensis (strain DSM 10229 / NCIMB 13809 / X14)).